A 261-amino-acid polypeptide reads, in one-letter code: Imidazole glycerol phosphate synthase subunit HisF (261 aa).

Residues aspartate 16 and aspartate 135 contribute to the active site.

This sequence belongs to the HisA/HisF family. Heterodimer of HisH and HisF.

The protein resides in the cytoplasm. It carries out the reaction 5-[(5-phospho-1-deoxy-D-ribulos-1-ylimino)methylamino]-1-(5-phospho-beta-D-ribosyl)imidazole-4-carboxamide + L-glutamine = D-erythro-1-(imidazol-4-yl)glycerol 3-phosphate + 5-amino-1-(5-phospho-beta-D-ribosyl)imidazole-4-carboxamide + L-glutamate + H(+). The protein operates within amino-acid biosynthesis; L-histidine biosynthesis; L-histidine from 5-phospho-alpha-D-ribose 1-diphosphate: step 5/9. Its function is as follows. IGPS catalyzes the conversion of PRFAR and glutamine to IGP, AICAR and glutamate. The HisF subunit catalyzes the cyclization activity that produces IGP and AICAR from PRFAR using the ammonia provided by the HisH subunit. The protein is Imidazole glycerol phosphate synthase subunit HisF of Mycobacterium ulcerans (strain Agy99).